A 464-amino-acid polypeptide reads, in one-letter code: tRNA modification GTPase MnmE (464 aa).

3 residues coordinate (6S)-5-formyl-5,6,7,8-tetrahydrofolate: Arg25, Glu87, and Lys130. A TrmE-type G domain is found at 226–386 (GLSVVLAGQP…LRAELLRIAG (161 aa)). Position 236 (Asn236) interacts with K(+). Residues 236-241 (NVGKSS), 255-261 (TPIAGTT), and 280-283 (DTAG) each bind GTP. Ser240 provides a ligand contact to Mg(2+). Residues Thr255, Ile257, and Thr260 each contribute to the K(+) site. Position 261 (Thr261) interacts with Mg(2+). (6S)-5-formyl-5,6,7,8-tetrahydrofolate is bound at residue Lys464.

Belongs to the TRAFAC class TrmE-Era-EngA-EngB-Septin-like GTPase superfamily. TrmE GTPase family. In terms of assembly, homodimer. Heterotetramer of two MnmE and two MnmG subunits. The cofactor is K(+).

Its subcellular location is the cytoplasm. In terms of biological role, exhibits a very high intrinsic GTPase hydrolysis rate. Involved in the addition of a carboxymethylaminomethyl (cmnm) group at the wobble position (U34) of certain tRNAs, forming tRNA-cmnm(5)s(2)U34. The protein is tRNA modification GTPase MnmE of Burkholderia ambifaria (strain MC40-6).